The sequence spans 408 residues: Succinylornithine transaminase (408 aa).

N6-(pyridoxal phosphate)lysine is present on Lys-252.

It belongs to the class-III pyridoxal-phosphate-dependent aminotransferase family. AstC subfamily. Pyridoxal 5'-phosphate is required as a cofactor.

The catalysed reaction is N(2)-succinyl-L-ornithine + 2-oxoglutarate = N-succinyl-L-glutamate 5-semialdehyde + L-glutamate. It functions in the pathway amino-acid degradation; L-arginine degradation via AST pathway; L-glutamate and succinate from L-arginine: step 3/5. Functionally, catalyzes the transamination of N(2)-succinylornithine and alpha-ketoglutarate into N(2)-succinylglutamate semialdehyde and glutamate. Can also act as an acetylornithine aminotransferase. In Salmonella enteritidis PT4 (strain P125109), this protein is Succinylornithine transaminase.